The sequence spans 365 residues: Membrane-bound lytic murein transglycosylase C (365 aa).

The signal sequence occupies residues 1–19; sequence MKKYTKYLPLLLIIPFLAA. Residue Cys-20 is the site of N-palmitoyl cysteine attachment. A lipid anchor (S-diacylglycerol cysteine) is attached at Cys-20.

It belongs to the transglycosylase Slt family.

It is found in the cell outer membrane. It catalyses the reaction Exolytic cleavage of the (1-&gt;4)-beta-glycosidic linkage between N-acetylmuramic acid (MurNAc) and N-acetylglucosamine (GlcNAc) residues in peptidoglycan, from either the reducing or the non-reducing ends of the peptidoglycan chains, with concomitant formation of a 1,6-anhydrobond in the MurNAc residue.. Functionally, murein-degrading enzyme. May play a role in recycling of muropeptides during cell elongation and/or cell division. The sequence is that of Membrane-bound lytic murein transglycosylase C from Actinobacillus pleuropneumoniae serotype 5b (strain L20).